Reading from the N-terminus, the 179-residue chain is Interleukin-22 (179 aa).

The first 33 residues, 1–33, serve as a signal peptide directing secretion; sequence MAVLQKSMSFSLMGTLAASCLLLIALWAQEANA. Cystine bridges form between C40-C132 and C89-C178. N54, N68, and N97 each carry an N-linked (GlcNAc...) asparagine glycan.

The protein belongs to the IL-10 family.

The protein resides in the secreted. Cytokine that plays a critical role in modulating tissue responses during inflammation. Plays an essential role in the regeneration of epithelial cells to maintain barrier function after injury and for the prevention of further tissue damage. Unlike most of the cytokines, has no effect on immune cells. Signals through a heterodimeric receptor composed of two subunits, the specific receptor IL22RA1 which is present on non-immune cells in many organs and the shared subunit IL10RB. Ligation of IL22RA1 with IL22 induces activation of the tyrosine kinases JAK1 and TYK2, which in turn activates STAT3. In turn, promotes cell survival and proliferation through STAT3, ERK1/2 and PI3K/AKT pathways. Promotes phosphorylation of GSK3B at 'Ser-9' and CTTN. Promotes epithelial cell spreading. In Mus musculus (Mouse), this protein is Interleukin-22 (Il22).